We begin with the raw amino-acid sequence, 742 residues long: Enhancer of polycomb-like protein 1 (742 aa).

Residues 1 to 27 (MPTPSAQLDQGIISSNGGTSGVSASST) show a composition bias toward polar residues. Disordered stretches follow at residues 1 to 28 (MPTP…SSTR), 416 to 446 (RQQS…QCQQ), and 718 to 742 (KKLV…HQQA). The span at 724 to 734 (QRQQQQQQQEQ) shows a compositional bias: low complexity.

This sequence belongs to the enhancer of polycomb family. In terms of assembly, component of the NuA4 histone acetyltransferase complex.

It localises to the nucleus. Component of the NuA4 histone acetyltransferase complex which is involved in transcriptional activation of selected genes principally by acetylation of nucleosomal histone H4 and H2A. The NuA4 complex is also involved in DNA repair. Involved in gene silencing by neighboring heterochromatin, blockage of the silencing spreading along the chromosome, and required for cell cycle progression through G2/M. This Eremothecium gossypii (strain ATCC 10895 / CBS 109.51 / FGSC 9923 / NRRL Y-1056) (Yeast) protein is Enhancer of polycomb-like protein 1 (EPL1).